Consider the following 443-residue polypeptide: ATP-dependent protease ATPase subunit HslU (443 aa).

Residues isoleucine 18, 60 to 65 (GVGKTE), aspartate 256, glutamate 321, and arginine 393 contribute to the ATP site.

It belongs to the ClpX chaperone family. HslU subfamily. In terms of assembly, a double ring-shaped homohexamer of HslV is capped on each side by a ring-shaped HslU homohexamer. The assembly of the HslU/HslV complex is dependent on binding of ATP.

It localises to the cytoplasm. ATPase subunit of a proteasome-like degradation complex; this subunit has chaperone activity. The binding of ATP and its subsequent hydrolysis by HslU are essential for unfolding of protein substrates subsequently hydrolyzed by HslV. HslU recognizes the N-terminal part of its protein substrates and unfolds these before they are guided to HslV for hydrolysis. The protein is ATP-dependent protease ATPase subunit HslU of Yersinia pestis bv. Antiqua (strain Antiqua).